Here is a 742-residue protein sequence, read N- to C-terminus: Condensin complex subunit 2 (742 aa).

Disordered regions lie at residues 1-62 (MKRA…FNSS), 151-172 (QQTE…KKER), 452-473 (FNSS…STER), and 564-604 (IQPH…PSSS). Positions 21 to 39 (ALEKKRAKENSRKQRELRR) are enriched in basic and acidic residues. A compositionally biased stretch (polar residues) spans 53-62 (LNNSSPFNSS). The span at 154–165 (EEGEDAENDDED) shows a compositional bias: acidic residues. Polar residues-rich tracts occupy residues 452-470 (FNSS…SLSS) and 592-604 (PKQT…PSSS).

This sequence belongs to the CND2 (condensin subunit 2) family. In terms of assembly, component of the condensin complex, which contains the cut14/smc2 and cut3/smc2 heterodimer, and three non SMC subunits that probably regulate the complex: cnd1, cnd2 and cnd3.

Its subcellular location is the nucleus. It localises to the cytoplasm. The protein localises to the chromosome. In terms of biological role, regulatory subunit of the condensin complex, a complex required for conversion of interphase chromatin into mitotic-like condense chromosomes. The condensin complex probably introduces positive supercoils into relaxed DNA in the presence of type I topoisomerases and converts nicked DNA into positive knotted forms in the presence of type II topoisomerases. The condensin complex probably also plays a role during interphase in processes such as DNA repair. This is Condensin complex subunit 2 (cnd2) from Schizosaccharomyces pombe (strain 972 / ATCC 24843) (Fission yeast).